A 147-amino-acid polypeptide reads, in one-letter code: NAD(P)H-quinone oxidoreductase subunit N (147 aa).

The protein belongs to the complex I NdhN subunit family. NDH-1 can be composed of about 15 different subunits; different subcomplexes with different compositions have been identified which probably have different functions.

It localises to the cellular thylakoid membrane. It catalyses the reaction a plastoquinone + NADH + (n+1) H(+)(in) = a plastoquinol + NAD(+) + n H(+)(out). The catalysed reaction is a plastoquinone + NADPH + (n+1) H(+)(in) = a plastoquinol + NADP(+) + n H(+)(out). In terms of biological role, NDH-1 shuttles electrons from an unknown electron donor, via FMN and iron-sulfur (Fe-S) centers, to quinones in the respiratory and/or the photosynthetic chain. The immediate electron acceptor for the enzyme in this species is believed to be plastoquinone. Couples the redox reaction to proton translocation, and thus conserves the redox energy in a proton gradient. Cyanobacterial NDH-1 also plays a role in inorganic carbon-concentration. This chain is NAD(P)H-quinone oxidoreductase subunit N, found in Synechococcus sp. (strain JA-2-3B'a(2-13)) (Cyanobacteria bacterium Yellowstone B-Prime).